The sequence spans 200 residues: Dephospho-CoA kinase (200 aa).

The 198-residue stretch at 3 to 200 (RIGLTGGIGS…LIAEILSRVN (198 aa)) folds into the DPCK domain. 11–16 (GSGKST) contributes to the ATP binding site.

Belongs to the CoaE family.

It is found in the cytoplasm. The catalysed reaction is 3'-dephospho-CoA + ATP = ADP + CoA + H(+). The protein operates within cofactor biosynthesis; coenzyme A biosynthesis; CoA from (R)-pantothenate: step 5/5. Catalyzes the phosphorylation of the 3'-hydroxyl group of dephosphocoenzyme A to form coenzyme A. This is Dephospho-CoA kinase from Corynebacterium glutamicum (strain ATCC 13032 / DSM 20300 / JCM 1318 / BCRC 11384 / CCUG 27702 / LMG 3730 / NBRC 12168 / NCIMB 10025 / NRRL B-2784 / 534).